We begin with the raw amino-acid sequence, 120 residues long: MFTKADKNKARKKRHLRIRKRVIGTTIRPRLNVFRSSKHIYAQLIDDATGVTLVSASSLDKELGLNNGANVEAATAVGTLIAKRAQEKGATEVIFDRGGYIYHGRIKALAEAAREAGLQF.

It belongs to the universal ribosomal protein uL18 family. In terms of assembly, part of the 50S ribosomal subunit; part of the 5S rRNA/L5/L18/L25 subcomplex. Contacts the 5S and 23S rRNAs.

Its function is as follows. This is one of the proteins that bind and probably mediate the attachment of the 5S RNA into the large ribosomal subunit, where it forms part of the central protuberance. The protein is Large ribosomal subunit protein uL18 of Brevibacillus brevis (strain 47 / JCM 6285 / NBRC 100599).